The sequence spans 572 residues: Phosphoenolpyruvate-protein phosphotransferase (572 aa).

The active-site Tele-phosphohistidine intermediate is H191. Phosphoenolpyruvate is bound by residues R298 and R334. Positions 433 and 457 each coordinate Mg(2+). Phosphoenolpyruvate contacts are provided by residues 456-457 (ND) and R467. C504 serves as the catalytic Proton donor.

It belongs to the PEP-utilizing enzyme family. Homodimer. Mg(2+) serves as cofactor.

The protein resides in the cytoplasm. It catalyses the reaction L-histidyl-[protein] + phosphoenolpyruvate = N(pros)-phospho-L-histidyl-[protein] + pyruvate. Its function is as follows. General (non sugar-specific) component of the phosphoenolpyruvate-dependent sugar phosphotransferase system (sugar PTS). This major carbohydrate active-transport system catalyzes the phosphorylation of incoming sugar substrates concomitantly with their translocation across the cell membrane. Enzyme I transfers the phosphoryl group from phosphoenolpyruvate (PEP) to the phosphoryl carrier protein (HPr). In Staphylococcus aureus (strain MRSA252), this protein is Phosphoenolpyruvate-protein phosphotransferase (ptsI).